The chain runs to 701 residues: Elongation factor G (701 aa).

The tr-type G domain maps to 11–287 (SRVRNFGIMA…AVVDYLPSPL (277 aa)). Residues 20–27 (AHIDAGKT), 84–88 (DTPGH), and 138–141 (NKMD) each bind GTP.

This sequence belongs to the TRAFAC class translation factor GTPase superfamily. Classic translation factor GTPase family. EF-G/EF-2 subfamily.

The protein localises to the cytoplasm. Catalyzes the GTP-dependent ribosomal translocation step during translation elongation. During this step, the ribosome changes from the pre-translocational (PRE) to the post-translocational (POST) state as the newly formed A-site-bound peptidyl-tRNA and P-site-bound deacylated tRNA move to the P and E sites, respectively. Catalyzes the coordinated movement of the two tRNA molecules, the mRNA and conformational changes in the ribosome. The protein is Elongation factor G (fusA) of Mycobacterium tuberculosis (strain CDC 1551 / Oshkosh).